The primary structure comprises 343 residues: S-adenosylmethionine:tRNA ribosyltransferase-isomerase (343 aa).

The protein belongs to the QueA family. As to quaternary structure, monomer.

It localises to the cytoplasm. It catalyses the reaction 7-aminomethyl-7-carbaguanosine(34) in tRNA + S-adenosyl-L-methionine = epoxyqueuosine(34) in tRNA + adenine + L-methionine + 2 H(+). Its pathway is tRNA modification; tRNA-queuosine biosynthesis. Transfers and isomerizes the ribose moiety from AdoMet to the 7-aminomethyl group of 7-deazaguanine (preQ1-tRNA) to give epoxyqueuosine (oQ-tRNA). The chain is S-adenosylmethionine:tRNA ribosyltransferase-isomerase from Geobacter sulfurreducens (strain ATCC 51573 / DSM 12127 / PCA).